Consider the following 158-residue polypeptide: 3-hydroxyacyl-[acyl-carrier-protein] dehydratase FabZ (158 aa).

Residue His60 is part of the active site.

This sequence belongs to the thioester dehydratase family. FabZ subfamily.

It is found in the cytoplasm. The enzyme catalyses a (3R)-hydroxyacyl-[ACP] = a (2E)-enoyl-[ACP] + H2O. In terms of biological role, involved in unsaturated fatty acids biosynthesis. Catalyzes the dehydration of short chain beta-hydroxyacyl-ACPs and long chain saturated and unsaturated beta-hydroxyacyl-ACPs. This Zymomonas mobilis subsp. mobilis (strain ATCC 31821 / ZM4 / CP4) protein is 3-hydroxyacyl-[acyl-carrier-protein] dehydratase FabZ.